The chain runs to 305 residues: Transmembrane epididymal protein 1 (305 aa).

A helical transmembrane segment spans residues 4–24 (FIGHISPGLFLVFYGLYQAII). The N-linked (GlcNAc...) asparagine glycan is linked to asparagine 32. The next 6 membrane-spanning stretches (helical) occupy residues 51–71 (LWQIAHAGWLKVVSGSLLIVY), 100–120 (LTMFILLTLDGCVEVVSRSVL), 124–144 (LVLLERGATVLGVYVLLLLLV), 159–179 (SLLILVVFLLMLVLTAELWAP), 187–207 (IETFLFLTMGSWLMQAAFILF), and 223–243 (IMLVTTFFCWHVMINALCMLG). The segment at 285 to 305 (EQQDRDDQAPLLSKSSPCDRA) is disordered.

It belongs to the TMEM45 family.

The protein localises to the membrane. This is Transmembrane epididymal protein 1 (Teddm1) from Rattus norvegicus (Rat).